Reading from the N-terminus, the 257-residue chain is Cyclin-C1-1 (257 aa).

It belongs to the cyclin family. Cyclin C subfamily.

This chain is Cyclin-C1-1, found in Oryza sativa subsp. japonica (Rice).